A 274-amino-acid polypeptide reads, in one-letter code: Rhamnulose-1-phosphate aldolase (274 aa).

Glutamate 117 is an active-site residue. Histidine 141, histidine 143, and histidine 212 together coordinate Zn(2+).

This sequence belongs to the aldolase class II family. RhaD subfamily. As to quaternary structure, homotetramer. Requires Zn(2+) as cofactor.

The protein localises to the cytoplasm. The enzyme catalyses L-rhamnulose 1-phosphate = (S)-lactaldehyde + dihydroxyacetone phosphate. It functions in the pathway carbohydrate degradation; L-rhamnose degradation; glycerone phosphate from L-rhamnose: step 3/3. Catalyzes the reversible cleavage of L-rhamnulose-1-phosphate to dihydroxyacetone phosphate (DHAP) and L-lactaldehyde. This chain is Rhamnulose-1-phosphate aldolase, found in Escherichia coli O157:H7.